A 901-amino-acid polypeptide reads, in one-letter code: Protein SOK1 (901 aa).

Disordered regions lie at residues Met1–Ile87, Arg106–Lys139, and Asn162–Asn231. Low complexity predominate over residues Pro10–Lys51. Residues Ser40 and Ser53 each carry the phosphoserine modification. Composition is skewed to polar residues over residues Gly74 to Ile87 and Arg106 to Met115. Low complexity predominate over residues Ser116–Leu138. Phosphoserine is present on residues Ser191 and Ser193. The span at Ala220–Asn231 shows a compositional bias: polar residues. Ser245 is modified (phosphoserine).

This sequence belongs to the TCP11 family.

Its subcellular location is the nucleus. Functionally, high copy suppressor of a cyclic AMP-dependent protein kinase mutant. The polypeptide is Protein SOK1 (SOK1) (Saccharomyces cerevisiae (strain ATCC 204508 / S288c) (Baker's yeast)).